The primary structure comprises 433 residues: GTPase Der (433 aa).

EngA-type G domains are found at residues asparagine 3–isoleucine 167 and proline 174–threonine 349. Residues glycine 9–serine 16, aspartate 56–tyrosine 60, asparagine 119–aspartate 122, glycine 180–serine 187, aspartate 227–isoleucine 231, and asparagine 292–aspartate 295 contribute to the GTP site. Residues glutamine 350–lysine 433 form the KH-like domain.

Belongs to the TRAFAC class TrmE-Era-EngA-EngB-Septin-like GTPase superfamily. EngA (Der) GTPase family. As to quaternary structure, associates with the 50S ribosomal subunit.

Functionally, GTPase that plays an essential role in the late steps of ribosome biogenesis. The protein is GTPase Der of Amoebophilus asiaticus (strain 5a2).